A 296-amino-acid chain; its full sequence is GTPase Era (296 aa).

The 168-residue stretch at 3-170 (KSGFVTIVGR…KELMFKYIPE (168 aa)) folds into the Era-type G domain. The tract at residues 11-18 (GRPNVGKS) is G1. Residue 11–18 (GRPNVGKS) coordinates GTP. The G2 stretch occupies residues 37–41 (QTTRN). Positions 58–61 (DTPG) are G3. GTP-binding positions include 58–62 (DTPGI) and 120–123 (NKID). The interval 120–123 (NKID) is G4. The interval 149–151 (ISA) is G5. Residues 201–278 (LSEEVPHGIA…YIRLWVKVKE (78 aa)) enclose the KH type-2 domain.

It belongs to the TRAFAC class TrmE-Era-EngA-EngB-Septin-like GTPase superfamily. Era GTPase family. Monomer.

It is found in the cytoplasm. The protein localises to the cell membrane. Its function is as follows. An essential GTPase that binds both GDP and GTP, with rapid nucleotide exchange. Plays a role in 16S rRNA processing and 30S ribosomal subunit biogenesis and possibly also in cell cycle regulation and energy metabolism. This chain is GTPase Era, found in Clostridium botulinum (strain Okra / Type B1).